The sequence spans 341 residues: DNA-directed RNA polymerase subunit alpha (341 aa).

The segment at 1 to 237 (MLSLSKNWNA…EQLQLFISFE (237 aa)) is alpha N-terminal domain (alpha-NTD). The segment at 247–341 (TDALPFSPYL…LSKRYEDSYN (95 aa)) is alpha C-terminal domain (alpha-CTD).

Belongs to the RNA polymerase alpha chain family. In terms of assembly, homodimer. The RNAP catalytic core consists of 2 alpha, 1 beta, 1 beta' and 1 omega subunit. When a sigma factor is associated with the core the holoenzyme is formed, which can initiate transcription.

The catalysed reaction is RNA(n) + a ribonucleoside 5'-triphosphate = RNA(n+1) + diphosphate. DNA-dependent RNA polymerase catalyzes the transcription of DNA into RNA using the four ribonucleoside triphosphates as substrates. The protein is DNA-directed RNA polymerase subunit alpha of Rickettsia bellii (strain RML369-C).